Reading from the N-terminus, the 245-residue chain is 1-(5-phosphoribosyl)-5-[(5-phosphoribosylamino)methylideneamino] imidazole-4-carboxamide isomerase (245 aa).

Aspartate 7 (proton acceptor) is an active-site residue. Residue aspartate 129 is the Proton donor of the active site.

Belongs to the HisA/HisF family.

It is found in the cytoplasm. The enzyme catalyses 1-(5-phospho-beta-D-ribosyl)-5-[(5-phospho-beta-D-ribosylamino)methylideneamino]imidazole-4-carboxamide = 5-[(5-phospho-1-deoxy-D-ribulos-1-ylimino)methylamino]-1-(5-phospho-beta-D-ribosyl)imidazole-4-carboxamide. It functions in the pathway amino-acid biosynthesis; L-histidine biosynthesis; L-histidine from 5-phospho-alpha-D-ribose 1-diphosphate: step 4/9. This is 1-(5-phosphoribosyl)-5-[(5-phosphoribosylamino)methylideneamino] imidazole-4-carboxamide isomerase from Escherichia coli O6:K15:H31 (strain 536 / UPEC).